The sequence spans 787 residues: Zinc finger protein 227 (787 aa).

The 72-residue stretch at 23 to 94 (VTFKDVAVVF…ERETQRNGHS (72 aa)) folds into the KRAB domain. C2H2-type zinc fingers lie at residues 243–275 (HPCR…LQTH), 312–334 (YRCD…YRTH), 340–362 (YRCE…QRVH), 368–390 (YKCE…QRVH), 396–418 (YKCE…QRVH), 424–446 (YKCD…RRVH), 452–474 (YRCE…FRVH), 480–502 (YTCK…QNVH), 508–530 (FKCE…QRVH), 536–558 (YRCD…QVIH), 564–586 (YTCE…QRVH), 592–614 (YKCE…QRVH), 620–642 (YKCG…QRVH), 648–670 (YKCD…QRGH), 676–698 (YKCE…QRVH), 704–726 (HKCE…LSVH), 732–754 (FKCE…QRVH), and 760–782 (YKCN…QKVH).

Belongs to the krueppel C2H2-type zinc-finger protein family.

The protein localises to the nucleus. May be involved in transcriptional regulation. This Bos taurus (Bovine) protein is Zinc finger protein 227 (ZNF227).